A 1270-amino-acid polypeptide reads, in one-letter code: Myosin-binding protein C, cardiac-type (1270 aa).

Position 1 is an N-acetylmethionine (Met-1). The segment at 1 to 24 is disordered; it reads MPEPGKKPVSAFNKKPRSAEVTAG. Phosphoserine is present on residues Ser-47 and Ser-72. Positions 94–105 are enriched in basic and acidic residues; that stretch reads VTEPAPPEKAES. The disordered stretch occupies residues 94-152; sequence VTEPAPPEKAESEVAPGAPEEVPAPATELEESVSSPEGSVSVTQDGSAAEHQGAPDDPI. Low complexity predominate over residues 106–135; the sequence is EVAPGAPEEVPAPATELEESVSSPEGSVSV. The 104-residue stretch at 151–254 folds into the Ig-like C2-type 1 domain; it reads PIGLFLMRPQ…FDSCNFNLTV (104 aa). Zn(2+) contacts are provided by Gln-206, His-208, Glu-221, and His-223. 3 positions are modified to phosphoserine; by PKA and PKC: Ser-273, Ser-282, and Ser-302. Phosphoserine is present on residues Ser-307 and Ser-423. Ig-like C2-type domains are found at residues 358-448, 449-539, 540-629, and 641-767; these read STAF…VKEP, PVLI…VQEK, KLEV…HFME, and PKIH…VIDV. Cys-432 and Cys-439 are oxidised to a cystine. Phosphoserine occurs at positions 455 and 546. Phosphothreonine is present on Thr-603. A disordered region spans residues 683–702; the sequence is VTQGKKASAGPHPDAPEDAG. Fibronectin type-III domains follow at residues 770–866 and 868–963; these read APAA…IGPP and EPTH…VQEI. The 95-residue stretch at 967 to 1061 folds into the Ig-like C2-type 6 domain; the sequence is PRLQLPRHLR…ATLILQIVDK (95 aa). The region spanning 1064 to 1159 is the Fibronectin type-III 3 domain; sequence PPQDIRIVET…TKEPVFIPRP (96 aa). Residues 1177-1270 enclose the Ig-like C2-type 7 domain; the sequence is PSFTQPLANR…ECRLEVRVPQ (94 aa). Arg-1237 carries the omega-N-methylarginine modification.

It belongs to the immunoglobulin superfamily. MyBP family. Substrate for phosphorylation by PKA and PKC. Reversible phosphorylation appears to modulate contraction. Post-translationally, polyubiquitinated.

Functionally, thick filament-associated protein located in the crossbridge region of vertebrate striated muscle a bands. In vitro it binds MHC, F-actin and native thin filaments, and modifies the activity of actin-activated myosin ATPase. It may modulate muscle contraction or may play a more structural role. In Mus musculus (Mouse), this protein is Myosin-binding protein C, cardiac-type (Mybpc3).